The following is a 435-amino-acid chain: Gamma-glutamyl phosphate reductase (435 aa).

Belongs to the gamma-glutamyl phosphate reductase family.

Its subcellular location is the cytoplasm. It carries out the reaction L-glutamate 5-semialdehyde + phosphate + NADP(+) = L-glutamyl 5-phosphate + NADPH + H(+). The protein operates within amino-acid biosynthesis; L-proline biosynthesis; L-glutamate 5-semialdehyde from L-glutamate: step 2/2. In terms of biological role, catalyzes the NADPH-dependent reduction of L-glutamate 5-phosphate into L-glutamate 5-semialdehyde and phosphate. The product spontaneously undergoes cyclization to form 1-pyrroline-5-carboxylate. The chain is Gamma-glutamyl phosphate reductase from Synechococcus sp. (strain CC9605).